Reading from the N-terminus, the 252-residue chain is Probable transcriptional regulatory protein Haur_3030 (252 aa).

It belongs to the TACO1 family.

It localises to the cytoplasm. The protein is Probable transcriptional regulatory protein Haur_3030 of Herpetosiphon aurantiacus (strain ATCC 23779 / DSM 785 / 114-95).